A 575-amino-acid chain; its full sequence is MTSSAWGLLALFLAALLVLAWPVGKFLAALCNERVPRWMQRVEAPLYKIAGTRPEQSMHWLRYAIALLAFNAVGAVFVYALQRLQGWLPLNPAGMGAVSPDSAFNTAVSFVSNTNWQGYAGESAMSYLTQMLGLAVQNFFSAATGIAVAFALIRGFARRGDGKARGLVGNFWADLTRITLWVLVPLSFVLAVFFVSQGVIQNFDAYKTVQTVEATAAGGQTLAMGPVASQEAIKMLGTNGGGFFNANSAHPYENPSALANLLQMIAVFLIPAALCFAFGRVAGDLRQGWAVLAAMTVMFVAAVMVVIPAEQDGNPLFGALGVDQLHGALQSGGNMEGKEVRFGIDASALFAAVTTAASCGAVIAMHDSFTPLGGMVPMVLMQLGEVVFGGVGSGLYGMLIFAMLAVFIAGLMIGRTPEYLGKKIEVREMKLISIAILVTPVLVLAGTAVAVLAGAGKAGIANPGAHGFSEILYALSSAANNNGSAFAGLSANTPFYNGLLGLAMWLGRFAVIVPVLAIAGSLAAKQRLPVTGGTLPTHGPLFVSLLIGTVLLVGLLNYVPALALGPVVEHLVLWK.

12 helical membrane passes run 4-24 (SAWG…WPVG), 61-81 (LRYA…VYAL), 133-153 (GLAV…FALI), 180-200 (LWVL…QGVI), 258-278 (LANL…CFAF), 289-309 (WAVL…VIPA), 344-364 (IDAS…AVIA), 372-392 (LGGM…GGVG), 394-414 (GLYG…LMIG), 431-451 (LISI…AVAV), 499-519 (LLGL…LAIA), and 545-565 (LLIG…LALG).

It belongs to the KdpA family. The system is composed of three essential subunits: KdpA, KdpB and KdpC.

The protein resides in the cell inner membrane. Functionally, part of the high-affinity ATP-driven potassium transport (or Kdp) system, which catalyzes the hydrolysis of ATP coupled with the electrogenic transport of potassium into the cytoplasm. This subunit binds the periplasmic potassium ions and delivers the ions to the membrane domain of KdpB through an intramembrane tunnel. The protein is Potassium-transporting ATPase potassium-binding subunit of Variovorax paradoxus (strain S110).